A 374-amino-acid polypeptide reads, in one-letter code: Alanine racemase (374 aa).

The Proton acceptor; specific for D-alanine role is filled by Lys44. An N6-(pyridoxal phosphate)lysine modification is found at Lys44. Arg139 contributes to the substrate binding site. The active-site Proton acceptor; specific for L-alanine is the Tyr269. Substrate is bound at residue Met317.

It belongs to the alanine racemase family. Pyridoxal 5'-phosphate serves as cofactor.

It catalyses the reaction L-alanine = D-alanine. The protein operates within amino-acid biosynthesis; D-alanine biosynthesis; D-alanine from L-alanine: step 1/1. Functionally, catalyzes the interconversion of L-alanine and D-alanine. May also act on other amino acids. The polypeptide is Alanine racemase (alr) (Bordetella avium (strain 197N)).